The chain runs to 120 residues: Large ribosomal subunit protein bL17 (120 aa).

The protein belongs to the bacterial ribosomal protein bL17 family. Part of the 50S ribosomal subunit. Contacts protein L32.

The polypeptide is Large ribosomal subunit protein bL17 (Bacillus subtilis (strain 168)).